The sequence spans 732 residues: Elongation factor 2 (732 aa).

The tr-type G domain maps to 19-260 (ERIRNIDIAA…MVIKNLPNPR (242 aa)). Residues 28-35 (AHIDHGKT), 94-98 (DTPGH), and 148-151 (NKVD) each bind GTP. A Diphthamide modification is found at His-598.

Belongs to the TRAFAC class translation factor GTPase superfamily. Classic translation factor GTPase family. EF-G/EF-2 subfamily.

It is found in the cytoplasm. In terms of biological role, catalyzes the GTP-dependent ribosomal translocation step during translation elongation. During this step, the ribosome changes from the pre-translocational (PRE) to the post-translocational (POST) state as the newly formed A-site-bound peptidyl-tRNA and P-site-bound deacylated tRNA move to the P and E sites, respectively. Catalyzes the coordinated movement of the two tRNA molecules, the mRNA and conformational changes in the ribosome. The chain is Elongation factor 2 from Picrophilus torridus (strain ATCC 700027 / DSM 9790 / JCM 10055 / NBRC 100828 / KAW 2/3).